The sequence spans 126 residues: uncharacterized protein (126 aa).

The next 3 membrane-spanning stretches (helical) occupy residues 4–24, 42–62, and 64–84; these read LIIAGILLLIKAMIFCIVNIL, AITIISSSVLYFLLSYYIINP, and ISASIIFDDCFSIFMLSSYTV.

It is found in the membrane. This is an uncharacterized protein from Saccharomyces cerevisiae (strain ATCC 204508 / S288c) (Baker's yeast).